The following is a 327-amino-acid chain: Tetraacyldisaccharide 4'-kinase (327 aa).

Thr-54–Thr-61 lines the ATP pocket. The segment at Pro-78–Gly-106 is disordered.

It belongs to the LpxK family.

It catalyses the reaction a lipid A disaccharide + ATP = a lipid IVA + ADP + H(+). It functions in the pathway glycolipid biosynthesis; lipid IV(A) biosynthesis; lipid IV(A) from (3R)-3-hydroxytetradecanoyl-[acyl-carrier-protein] and UDP-N-acetyl-alpha-D-glucosamine: step 6/6. Its function is as follows. Transfers the gamma-phosphate of ATP to the 4'-position of a tetraacyldisaccharide 1-phosphate intermediate (termed DS-1-P) to form tetraacyldisaccharide 1,4'-bis-phosphate (lipid IVA). The sequence is that of Tetraacyldisaccharide 4'-kinase from Gluconobacter oxydans (strain 621H) (Gluconobacter suboxydans).